The sequence spans 120 residues: NAD(P)H-quinone oxidoreductase subunit 3, chloroplastic (120 aa).

The next 3 helical transmembrane spans lie at 9–29, 64–84, and 88–108; these read IFWAFLIISSAIPVLAFLISG, MFALVFVVFDVETVFLYPWAM, and VLGVSAFIEAFIFVLILILGL.

It belongs to the complex I subunit 3 family. In terms of assembly, NDH is composed of at least 16 different subunits, 5 of which are encoded in the nucleus.

The protein resides in the plastid. The protein localises to the chloroplast thylakoid membrane. It catalyses the reaction a plastoquinone + NADH + (n+1) H(+)(in) = a plastoquinol + NAD(+) + n H(+)(out). The catalysed reaction is a plastoquinone + NADPH + (n+1) H(+)(in) = a plastoquinol + NADP(+) + n H(+)(out). In terms of biological role, NDH shuttles electrons from NAD(P)H:plastoquinone, via FMN and iron-sulfur (Fe-S) centers, to quinones in the photosynthetic chain and possibly in a chloroplast respiratory chain. The immediate electron acceptor for the enzyme in this species is believed to be plastoquinone. Couples the redox reaction to proton translocation, and thus conserves the redox energy in a proton gradient. The polypeptide is NAD(P)H-quinone oxidoreductase subunit 3, chloroplastic (Lobularia maritima (Sweet alyssum)).